The following is a 127-amino-acid chain: Thioredoxin domain-containing protein 8 (127 aa).

The 92-residue stretch at 1–92 (MVQIIKDTNE…SQKVTLFSRI (92 aa)) folds into the Thioredoxin domain. Cys-32 and Cys-35 form a disulfide bridge.

The protein belongs to the thioredoxin family. Testis-specific. Only expressed during spermiogenesis, prominently in the Golgi apparatus of pachytene spermatocytes and round and elongated spermatids, with a transient localization in the developing acrosome of round spermatids (at protein level).

The protein localises to the cytoplasm. It localises to the golgi apparatus. Functionally, may be required for post-translational modifications of proteins required for acrosomal biogenesis. May act by reducing disulfide bonds within the sperm. In Homo sapiens (Human), this protein is Thioredoxin domain-containing protein 8 (TXNDC8).